The sequence spans 357 residues: Golgi to ER traffic protein 2 (357 aa).

Residues 1 to 224 (MSETTDKQLT…AKYHTYQEQL (224 aa)) lie on the Cytoplasmic side of the membrane. Positions 65-81 (TDTATVTDSSTNATSVS) are enriched in low complexity. A disordered region spans residues 65-99 (TDTATVTDSSTNATSVSPSAAKATPTSTGVSSAIS). The segment covering 88–98 (TPTSTGVSSAI) has biased composition (polar residues). The helical transmembrane segment at 225 to 245 (WQFRFLVVRILATIFNFAYHF) threads the bilayer. The Lumenal segment spans residues 246-270 (ITIPSFTASNHAYVRDLSEVYPLLG). The chain crosses the membrane as a helical span at residues 271–290 (FMTIFTSIEVVIIATYYLLF). The Cytoplasmic portion of the chain corresponds to 291–334 (TKLGLFHASNQKSFILKGISTLSMFVPQLLRYEPLVATFLGYKE). Residues 335–355 (LLGIFVGDLSLVVVMFGLLSF) form a helical membrane-spanning segment. Over 356–357 (SN) the chain is Lumenal.

This sequence belongs to the GET2 family. As to quaternary structure, component of the Golgi to ER traffic (GET) complex, which is composed of GET1, GET2 and GET3. Within the complex, GET1 and GET2 form a heterotetramer which is stabilized by phosphatidylinositol binding and which binds to the GET3 homodimer.

The protein localises to the endoplasmic reticulum membrane. Its subcellular location is the golgi apparatus membrane. Its function is as follows. Required for the post-translational delivery of tail-anchored (TA) proteins to the endoplasmic reticulum. Together with GET1, acts as a membrane receptor for soluble GET3, which recognizes and selectively binds the transmembrane domain of TA proteins in the cytosol. The GET complex cooperates with the HDEL receptor ERD2 to mediate the ATP-dependent retrieval of resident ER proteins that contain a C-terminal H-D-E-L retention signal from the Golgi to the ER. The protein is Golgi to ER traffic protein 2 of Lodderomyces elongisporus (strain ATCC 11503 / CBS 2605 / JCM 1781 / NBRC 1676 / NRRL YB-4239) (Yeast).